Consider the following 55-residue polypeptide: Large ribosomal subunit protein bL33 (55 aa).

Belongs to the bacterial ribosomal protein bL33 family.

This Roseobacter denitrificans (strain ATCC 33942 / OCh 114) (Erythrobacter sp. (strain OCh 114)) protein is Large ribosomal subunit protein bL33.